An 82-amino-acid chain; its full sequence is Sec-independent protein translocase protein TatA (82 aa).

A helical membrane pass occupies residues M1–G21. The interval K41–A82 is disordered. A compositionally biased stretch (basic and acidic residues) spans A42–A82.

It belongs to the TatA/E family. The Tat system comprises two distinct complexes: a TatABC complex, containing multiple copies of TatA, TatB and TatC subunits, and a separate TatA complex, containing only TatA subunits. Substrates initially bind to the TatABC complex, which probably triggers association of the separate TatA complex to form the active translocon.

Its subcellular location is the cell inner membrane. Its function is as follows. Part of the twin-arginine translocation (Tat) system that transports large folded proteins containing a characteristic twin-arginine motif in their signal peptide across membranes. TatA could form the protein-conducting channel of the Tat system. This is Sec-independent protein translocase protein TatA from Vibrio campbellii (strain ATCC BAA-1116).